The sequence spans 206 residues: Protein GrpE (206 aa).

The span at 1 to 18 (MNNEDKKLQDEQLQKETV) shows a compositional bias: basic and acidic residues. The disordered stretch occupies residues 1-21 (MNNEDKKLQDEQLQKETVEAA).

The protein belongs to the GrpE family. Homodimer.

It is found in the cytoplasm. Its function is as follows. Participates actively in the response to hyperosmotic and heat shock by preventing the aggregation of stress-denatured proteins, in association with DnaK and GrpE. It is the nucleotide exchange factor for DnaK and may function as a thermosensor. Unfolded proteins bind initially to DnaJ; upon interaction with the DnaJ-bound protein, DnaK hydrolyzes its bound ATP, resulting in the formation of a stable complex. GrpE releases ADP from DnaK; ATP binding to DnaK triggers the release of the substrate protein, thus completing the reaction cycle. Several rounds of ATP-dependent interactions between DnaJ, DnaK and GrpE are required for fully efficient folding. The polypeptide is Protein GrpE (Photobacterium profundum (strain SS9)).